The chain runs to 460 residues: UDP-N-acetylmuramoylalanine--D-glutamate ligase (460 aa).

ATP is bound at residue Gly123–Thr129.

The protein belongs to the MurCDEF family.

The protein localises to the cytoplasm. It catalyses the reaction UDP-N-acetyl-alpha-D-muramoyl-L-alanine + D-glutamate + ATP = UDP-N-acetyl-alpha-D-muramoyl-L-alanyl-D-glutamate + ADP + phosphate + H(+). Its pathway is cell wall biogenesis; peptidoglycan biosynthesis. Cell wall formation. Catalyzes the addition of glutamate to the nucleotide precursor UDP-N-acetylmuramoyl-L-alanine (UMA). The chain is UDP-N-acetylmuramoylalanine--D-glutamate ligase (murD) from Enterococcus hirae.